The following is a 374-amino-acid chain: Cell division protein DivIB (374 aa).

The segment at 1 to 90 (MWKISNENDI…EEEHFADRLP (90 aa)) is disordered. Over 1–103 (MWKISNENDI…KTRNKRLYRR (103 aa)) the chain is Cytoplasmic. The span at 39–53 (YLKKQAEEAASKGEN) shows a compositional bias: basic and acidic residues. A compositionally biased stretch (polar residues) spans 56–75 (AEVTITLQEQSQEEPQQHLP). Residues 104–124 (LAFILTCLGTAILVALYFVSP) traverse the membrane as a helical segment. Residues 125–374 (LSRLSEVTVS…GENQEVQQAE (250 aa)) are Extracellular-facing. The POTRA domain occupies 126–197 (SRLSEVTVSG…NSFKIDIQEY (72 aa)). The tract at residues 325–374 (KESEETGSEVSEDSAVENQEVVDPNAGVATDGANNGTPTNGENQEVQQAE) is disordered. Positions 326 to 339 (ESEETGSEVSEDSA) are enriched in acidic residues. The segment covering 356–374 (GANNGTPTNGENQEVQQAE) has biased composition (polar residues).

This sequence belongs to the FtsQ/DivIB family. DivIB subfamily.

It localises to the cell membrane. Functionally, cell division protein that may be involved in stabilizing or promoting the assembly of the division complex. In Enterococcus faecalis (strain 62), this protein is Cell division protein DivIB.